Consider the following 358-residue polypeptide: DNA integrity scanning protein DisA (358 aa).

Residues 6–144 (RPTLREAVAR…RGERHVLTDS (139 aa)) enclose the DAC domain. ATP contacts are provided by residues G73, L91, and 104 to 108 (TRHRS).

It belongs to the DisA family. As to quaternary structure, homooctamer. It depends on Mg(2+) as a cofactor.

The enzyme catalyses 2 ATP = 3',3'-c-di-AMP + 2 diphosphate. Its function is as follows. Participates in a DNA-damage check-point. DisA forms globular foci that rapidly scan along the chromosomes searching for lesions. In terms of biological role, also has diadenylate cyclase activity, catalyzing the condensation of 2 ATP molecules into cyclic di-AMP (c-di-AMP). c-di-AMP likely acts as a signaling molecule that may couple DNA integrity with a cellular process. The chain is DNA integrity scanning protein DisA from Mycobacterium bovis (strain ATCC BAA-935 / AF2122/97).